The primary structure comprises 534 residues: Low affinity inorganic phosphate transporter 1 (534 aa).

Topologically, residues 1–23 are cytoplasmic; that stretch reads MAKDLQVLTALDVAKTQLYHFTA. Residues 24-44 form a helical membrane-spanning segment; it reads IVIAGMGFFTDAYDLFCISLV. Residues 45–69 lie on the Extracellular side of the membrane; it reads TKLLGRIYYHHEGALKPGSLPPNVA. Residues 70 to 90 form a helical membrane-spanning segment; it reads AAVNGVAFCGTLAGQLFFGWL. At 91–98 the chain is on the cytoplasmic side; the sequence is GDKLGRKK. Residues 99-119 form a helical membrane-spanning segment; that stretch reads VYGMTLMLMVICSIASGLSFG. At 120 to 124 the chain is on the extracellular side; that stretch reads HTPKS. Residues 125-145 traverse the membrane as a helical segment; it reads VMATLCFFRFWLGFGIGGDYP. Residues 146-163 lie on the Cytoplasmic side of the membrane; sequence LSATIMSEYANKKTRGAF. Residues 164–184 form a helical membrane-spanning segment; the sequence is IAAVFAMQGFGILAGGMVAII. Residues 185 to 210 lie on the Extracellular side of the membrane; that stretch reads VSAAFKNQFPAPAYKDGALASTISQA. The helical transmembrane segment at 211-231 threads the bilayer; the sequence is DFVWRIIVMFGAIPTALTYYW. Topologically, residues 232–290 are cytoplasmic; that stretch reads RMKMPETARYTALVAKNLKQATNDMSKVLQVEIEPEQEKVEEISQGNDFGLFTKQFLRR. The chain crosses the membrane as a helical span at residues 291-311; the sequence is HGLHLLGTASTWFLLDIAFYS. Topologically, residues 312 to 343 are extracellular; sequence QNLFQKDIFSAIGWIPPAETMNALEEVYRIAR. Residues 344-364 form a helical membrane-spanning segment; it reads AQTLIALCSTVPGYWFTVAFI. Over 365–369 the chain is Cytoplasmic; it reads DKIGR. The helical transmembrane segment at 370-390 threads the bilayer; that stretch reads FAIQLMGFFFMTVFMFALAIP. Residues 391-400 lie on the Extracellular side of the membrane; that stretch reads YTHWTHKDNR. Residues 401–421 form a helical membrane-spanning segment; sequence IGFVIMYSLTFFFANFGPNAT. The Cytoplasmic portion of the chain corresponds to 422–440; it reads TFVVPAEIFPARLRSTCHG. A helical membrane pass occupies residues 441–461; it reads ISAAAGKAGAMVGAFGFLYAA. The Extracellular portion of the chain corresponds to 462–481; that stretch reads QSTDPKKTDAGYPAGIGVRN. The chain crosses the membrane as a helical span at residues 482-502; that stretch reads SLIVLGCVNFLGMLFTLLVPE. Over 503–534 the chain is Cytoplasmic; sequence SKGKSLEEMSRENEGEDENGTEMRASGRTVPV. A disordered region spans residues 507 to 534; it reads SLEEMSRENEGEDENGTEMRASGRTVPV.

Belongs to the major facilitator superfamily. Phosphate:H(+) symporter (TC 2.A.1.9) family.

Its subcellular location is the cell membrane. The catalysed reaction is phosphate(in) + H(+)(in) = phosphate(out) + H(+)(out). In terms of biological role, low-affinity transporter for external inorganic phosphate (Pi). Involved in phosphorus (P) remobilization from dying to developing tissues during corolla senescence in an ethylene-dependent manner. The polypeptide is Low affinity inorganic phosphate transporter 1 (Petunia hybrida (Petunia)).